Consider the following 522-residue polypeptide: Cytochrome P450 monooxygenase AKT7 (522 aa).

The helical transmembrane segment at 10 to 30 (LYVTCTVLAALILGYIQAMII) threads the bilayer. Cys452 contacts heme.

This sequence belongs to the cytochrome P450 family. Heme serves as cofactor.

The protein localises to the membrane. It participates in mycotoxin biosynthesis. Functionally, cytochrome P450 monooxygenase; part of the gene clusters that mediate the biosynthesis of the host-selective toxins (HSTs) AK-toxins responsible for Japanese pear black spot disease by the Japanese pear pathotype. AK-toxins are esters of 9,10-epoxy 8-hydroxy 9-methyldecatrienoic acid (EDA). On cellular level, AK-toxins affect plasma membrane of susceptible cells and cause a sudden increase in loss of K(+) after a few minutes of toxin treatment. The acyl-CoA ligase AKT1, the hydrolase AKT2 and enoyl-CoA hydratase AKT3 are all involved in the biosynthesis of the AK-, AF- and ACT-toxin common 9,10-epoxy-8-hydroxy-9-methyl-decatrienoic acid (EDA) structural moiety. Part of the EDA biosynthesis occurs in the peroxisome since these 3 enzymes are localized in peroxisomes. The exact roles of the 3 enzymes, as well as of additional AK-toxin clusters enzymes, including AKT4, AKT6 and AKTS1, have still to be elucidated. The Cytochrome P450 monooxygenase AKT7 on the other side functions to limit production of EDA and AK-toxin, probably via the catalysis of a side reaction of EDA or its precursor. The polypeptide is Cytochrome P450 monooxygenase AKT7 (Alternaria alternata (Alternaria rot fungus)).